The following is a 348-amino-acid chain: Chlorophyll(ide) b reductase NOL, chloroplastic (348 aa).

The N-terminal 61 residues, 1–61, are a transit peptide targeting the chloroplast; that stretch reads MATWSGFNVS…TRQNLTVTPS (61 aa). 84 to 108 contacts NAD(+); it reads ITGSTKGIGYALAREFLKAGDNVVI. Tyrosine 233 acts as the Proton acceptor in catalysis.

Belongs to the short-chain dehydrogenases/reductases (SDR) family. In terms of assembly, interacts with NCY1 to form a complex that acts as a chlorophyll b reductase. Interacts with HCAR, RCCR and the LHCII complex. Part of a SGR1-CCE-LHCII complex, which acts in chlorophyll breakdown.

Its subcellular location is the plastid. It is found in the chloroplast thylakoid membrane. The catalysed reaction is 7(1)-hydroxychlorophyllide a + NAD(+) = chlorophyllide b + NADH + H(+). The enzyme catalyses 7(1)-hydroxychlorophyllide a + NADP(+) = chlorophyllide b + NADPH + H(+). Required for chlorophyll b degradation. Chlorophyll b, chlorophyllide b, pheophorbide b and pheophytin b can be used as substrates. Belongs to the chlorophyll catabolic enzymes (CCEs). This chain is Chlorophyll(ide) b reductase NOL, chloroplastic (NOL), found in Arabidopsis thaliana (Mouse-ear cress).